We begin with the raw amino-acid sequence, 323 residues long: Methionyl-tRNA formyltransferase (323 aa).

115–118 is a (6S)-5,6,7,8-tetrahydrofolate binding site; sequence SLLP.

Belongs to the Fmt family.

The catalysed reaction is L-methionyl-tRNA(fMet) + (6R)-10-formyltetrahydrofolate = N-formyl-L-methionyl-tRNA(fMet) + (6S)-5,6,7,8-tetrahydrofolate + H(+). Functionally, attaches a formyl group to the free amino group of methionyl-tRNA(fMet). The formyl group appears to play a dual role in the initiator identity of N-formylmethionyl-tRNA by promoting its recognition by IF2 and preventing the misappropriation of this tRNA by the elongation apparatus. The sequence is that of Methionyl-tRNA formyltransferase from Blochmanniella floridana.